A 251-amino-acid polypeptide reads, in one-letter code: uncharacterized protein (251 aa).

This sequence belongs to the methyltransferase superfamily.

It localises to the cytoplasm. Its subcellular location is the nucleus. Its function is as follows. Probable methyltransferase. This is an uncharacterized protein from Schizosaccharomyces pombe (strain 972 / ATCC 24843) (Fission yeast).